The following is a 211-amino-acid chain: Octanoyltransferase (211 aa).

The BPL/LPL catalytic domain occupies 28–203; that stretch reads GSAPETLLLV…HFQSLLKTWL (176 aa). Substrate-binding positions include 66–73, 133–135, and 146–148; these read RGGDITYH, SIG, and GFA. Catalysis depends on Cys-164, which acts as the Acyl-thioester intermediate.

It belongs to the LipB family.

It localises to the cytoplasm. The catalysed reaction is octanoyl-[ACP] + L-lysyl-[protein] = N(6)-octanoyl-L-lysyl-[protein] + holo-[ACP] + H(+). The protein operates within protein modification; protein lipoylation via endogenous pathway; protein N(6)-(lipoyl)lysine from octanoyl-[acyl-carrier-protein]: step 1/2. Catalyzes the transfer of endogenously produced octanoic acid from octanoyl-acyl-carrier-protein onto the lipoyl domains of lipoate-dependent enzymes. Lipoyl-ACP can also act as a substrate although octanoyl-ACP is likely to be the physiological substrate. This Syntrophotalea carbinolica (strain DSM 2380 / NBRC 103641 / GraBd1) (Pelobacter carbinolicus) protein is Octanoyltransferase.